The chain runs to 498 residues: MSMFLGLLFLFPLFFILFKNLLPPRKKLPPGPTGLPLIGNLHQLGRLLHSSLHKLSLEHGPVMLVRWGVVPMAVFSSNEAAKEVLKTHDLETCNRPKLVANGLFTHGYKDIGFTQYGEEWREMKKFVGLELFSPKKHKSFRYIREEEGDLLVKKISNYAQTQTLVDLRKSLFSYTASIIFREAFGQNFRECDYINMDKLEELVQETETNVCSLAFTDFFPRGLGWLVDRISGQHSRMNIAFSKLTTFFEDVIDELLKTKQLDDHSDLVTAMLDVINRPRKFGSLKITYDHLIAMMSDVVLAGVNAGTVTMIWTMTELTRHPRVMKKLQEEIRATLGPNKERITEEDLEKVEYLNLVIKESFRLHPPAPLLLPRETMSDIEIQGYHIPKNAHVKINTYAIGRDPKRWTNPEEFNPERFLNTSINYKGQHYELLPFGAGRRNCPGMTLGITILELGLLNILYYFDWSLPSGMTIKDIDMEEDGALNIAKKVPLQLVPTLP.

Residues Met3 to Pro23 traverse the membrane as a helical segment. Residue Cys441 participates in heme binding.

Belongs to the cytochrome P450 family. It depends on heme as a cofactor.

The protein localises to the membrane. The polypeptide is Cytochrome P450 71B31 (CYP71B31) (Arabidopsis thaliana (Mouse-ear cress)).